Consider the following 294-residue polypeptide: MPSADNDTDEKPSWADLVDEAGETGLTGQIPPSSEVREGENKIVTEYKRDDEGKLQKIITTYRVETRRVAKEIAKRKLWKKFGDSKNDKPGPNKTTTNVCDDVFLILTSNKENPDATEEDPLKKLSGQKIVQCRICKGDHWTTKCPYKDQLEVIHQQLKEDDGSGQPGTPPSEPANPAAASTSGKYVAPGLRDGANRRGETMPSRSQRDETATIRVTNLSEETRESDLQELFRPLGPISRIFLAKDKFTNQSKGFAFINFVHREDAARAIEVLSGFGYDHLILNVEWAKPSTQQ.

Disordered regions lie at residues 1-43 (MPSA…ENKI) and 160-211 (EDDG…RDET). Residues 194–211 (GANRRGETMPSRSQRDET) show a composition bias toward basic and acidic residues. The region spanning 212–290 (ATIRVTNLSE…LILNVEWAKP (79 aa)) is the RRM domain.

The protein belongs to the eIF-3 subunit G family. As to quaternary structure, component of the eukaryotic translation initiation factor 3 (eIF-3) complex.

The protein localises to the cytoplasm. In terms of biological role, RNA-binding component of the eukaryotic translation initiation factor 3 (eIF-3) complex, which is involved in protein synthesis of a specialized repertoire of mRNAs and, together with other initiation factors, stimulates binding of mRNA and methionyl-tRNAi to the 40S ribosome. The eIF-3 complex specifically targets and initiates translation of a subset of mRNAs involved in cell proliferation. This subunit can bind 18S rRNA. This Nematostella vectensis (Starlet sea anemone) protein is Eukaryotic translation initiation factor 3 subunit G.